The primary structure comprises 205 residues: N-(5'-phosphoribosyl)anthranilate isomerase (205 aa).

The protein belongs to the TrpF family.

It catalyses the reaction N-(5-phospho-beta-D-ribosyl)anthranilate = 1-(2-carboxyphenylamino)-1-deoxy-D-ribulose 5-phosphate. Its pathway is amino-acid biosynthesis; L-tryptophan biosynthesis; L-tryptophan from chorismate: step 3/5. The protein is N-(5'-phosphoribosyl)anthranilate isomerase of Trichlorobacter lovleyi (strain ATCC BAA-1151 / DSM 17278 / SZ) (Geobacter lovleyi).